Here is a 148-residue protein sequence, read N- to C-terminus: Deoxyuridine 5'-triphosphate nucleotidohydrolase (148 aa).

Substrate-binding positions include 67 to 69 (RSG), Asn80, 84 to 86 (TID), and Lys94.

It belongs to the dUTPase family. It depends on Mg(2+) as a cofactor.

The enzyme catalyses dUTP + H2O = dUMP + diphosphate + H(+). It participates in pyrimidine metabolism; dUMP biosynthesis; dUMP from dCTP (dUTP route): step 2/2. This enzyme is involved in nucleotide metabolism: it produces dUMP, the immediate precursor of thymidine nucleotides and it decreases the intracellular concentration of dUTP so that uracil cannot be incorporated into DNA. The chain is Deoxyuridine 5'-triphosphate nucleotidohydrolase from Orientia tsutsugamushi (strain Ikeda) (Rickettsia tsutsugamushi).